The primary structure comprises 545 residues: Gamma-curcumene synthase (545 aa).

Residues aspartate 299, aspartate 303, asparagine 442, and glutamate 450 each contribute to the Mg(2+) site. The short motif at 299–303 is the DDXXD motif element; it reads DDTYD.

Belongs to the terpene synthase family. The cofactor is Mg(2+).

It is found in the cytoplasm. The protein localises to the cytosol. It catalyses the reaction (2E,6E)-farnesyl diphosphate = gamma-curcumene + diphosphate. It participates in secondary metabolite biosynthesis; terpenoid biosynthesis. In terms of biological role, sesquiterpene synthase involved in gamma-curcumene biosynthesis. The protein is Gamma-curcumene synthase of Pogostemon cablin (Patchouli).